A 580-amino-acid polypeptide reads, in one-letter code: 2-succinyl-5-enolpyruvyl-6-hydroxy-3-cyclohexene-1-carboxylate synthase (580 aa).

This sequence belongs to the TPP enzyme family. MenD subfamily. As to quaternary structure, homodimer. The cofactor is Mg(2+). It depends on Mn(2+) as a cofactor. Thiamine diphosphate is required as a cofactor.

The catalysed reaction is isochorismate + 2-oxoglutarate + H(+) = 5-enolpyruvoyl-6-hydroxy-2-succinyl-cyclohex-3-ene-1-carboxylate + CO2. It functions in the pathway quinol/quinone metabolism; 1,4-dihydroxy-2-naphthoate biosynthesis; 1,4-dihydroxy-2-naphthoate from chorismate: step 2/7. The protein operates within quinol/quinone metabolism; menaquinone biosynthesis. Catalyzes the thiamine diphosphate-dependent decarboxylation of 2-oxoglutarate and the subsequent addition of the resulting succinic semialdehyde-thiamine pyrophosphate anion to isochorismate to yield 2-succinyl-5-enolpyruvyl-6-hydroxy-3-cyclohexene-1-carboxylate (SEPHCHC). The protein is 2-succinyl-5-enolpyruvyl-6-hydroxy-3-cyclohexene-1-carboxylate synthase of Listeria innocua serovar 6a (strain ATCC BAA-680 / CLIP 11262).